A 169-amino-acid chain; its full sequence is Probable calcium-binding protein CML13 (169 aa).

Positions Met-1–Arg-26 are disordered. The span at Gly-15–Gln-24 shows a compositional bias: basic residues. EF-hand domains follow at residues Gln-24–Glu-59, Met-60–Glu-95, Asp-97–Asn-132, and Phe-133–Gly-168. Ca(2+)-binding residues include Asp-37, Asp-39, Ser-41, Thr-43, Glu-48, Asp-73, Asp-75, Ser-77, Ser-79, Glu-84, Asp-110, Asp-112, Asn-114, Lys-116, Asp-121, Asp-146, Asn-148, Asp-150, Glu-152, and Glu-157.

Functionally, potential calcium sensor. This is Probable calcium-binding protein CML13 (CML13) from Oryza sativa subsp. japonica (Rice).